A 334-amino-acid polypeptide reads, in one-letter code: Aspartate carbamoyltransferase catalytic subunit (334 aa).

The carbamoyl phosphate site is built by Arg-70 and Thr-71. L-aspartate is bound at residue Lys-98. 3 residues coordinate carbamoyl phosphate: Arg-120, His-150, and Gln-153. Residues Arg-183 and Arg-239 each coordinate L-aspartate. Gly-280 and Pro-281 together coordinate carbamoyl phosphate.

Belongs to the aspartate/ornithine carbamoyltransferase superfamily. ATCase family. In terms of assembly, heterododecamer (2C3:3R2) of six catalytic PyrB chains organized as two trimers (C3), and six regulatory PyrI chains organized as three dimers (R2).

The enzyme catalyses carbamoyl phosphate + L-aspartate = N-carbamoyl-L-aspartate + phosphate + H(+). It functions in the pathway pyrimidine metabolism; UMP biosynthesis via de novo pathway; (S)-dihydroorotate from bicarbonate: step 2/3. Functionally, catalyzes the condensation of carbamoyl phosphate and aspartate to form carbamoyl aspartate and inorganic phosphate, the committed step in the de novo pyrimidine nucleotide biosynthesis pathway. The sequence is that of Aspartate carbamoyltransferase catalytic subunit from Pseudomonas paraeruginosa (strain DSM 24068 / PA7) (Pseudomonas aeruginosa (strain PA7)).